A 180-amino-acid chain; its full sequence is MNDKLALIKSSIKSIPNHPKEGIIFRDITSLLEVPAAFQTVVDLFVTRYKEKGITKVLGTESRGFIFGAPVALALNVPFVLVRKPGKLPRETISQTYQLEYGQDTLEIHTDAIHAQDKVLIIDDLLATGGTVEATVKLVQRLGGDVQDAAFVINLPDLGGEARLNALGIDAYTLVDFAGH.

Belongs to the purine/pyrimidine phosphoribosyltransferase family. Homodimer.

It is found in the cytoplasm. The enzyme catalyses AMP + diphosphate = 5-phospho-alpha-D-ribose 1-diphosphate + adenine. The protein operates within purine metabolism; AMP biosynthesis via salvage pathway; AMP from adenine: step 1/1. Catalyzes a salvage reaction resulting in the formation of AMP, that is energically less costly than de novo synthesis. The chain is Adenine phosphoribosyltransferase from Pasteurella multocida (strain Pm70).